Here is a 629-residue protein sequence, read N- to C-terminus: tRNA uridine 5-carboxymethylaminomethyl modification enzyme MnmG (629 aa).

FAD is bound by residues 14–19 (GAGHAG), valine 126, and serine 181. Position 273–287 (273–287 (GPRYCPSIEDKVVRF)) interacts with NAD(+). Glutamine 370 lines the FAD pocket.

This sequence belongs to the MnmG family. As to quaternary structure, homodimer. Heterotetramer of two MnmE and two MnmG subunits. Requires FAD as cofactor.

Its subcellular location is the cytoplasm. NAD-binding protein involved in the addition of a carboxymethylaminomethyl (cmnm) group at the wobble position (U34) of certain tRNAs, forming tRNA-cmnm(5)s(2)U34. This is tRNA uridine 5-carboxymethylaminomethyl modification enzyme MnmG from Geobacillus kaustophilus (strain HTA426).